The primary structure comprises 221 residues: Flagellar L-ring protein 1 (221 aa).

The N-terminal stretch at 1–16 (MKRFLILTPMVLALCG) is a signal peptide. C17 is lipidated: N-palmitoyl cysteine. C17 carries S-diacylglycerol cysteine lipidation.

Belongs to the FlgH family. As to quaternary structure, the basal body constitutes a major portion of the flagellar organelle and consists of four rings (L,P,S, and M) mounted on a central rod.

It localises to the cell outer membrane. The protein resides in the bacterial flagellum basal body. In terms of biological role, assembles around the rod to form the L-ring and probably protects the motor/basal body from shearing forces during rotation. The polypeptide is Flagellar L-ring protein 1 (Yersinia pestis).